The primary structure comprises 661 residues: Meiotic coiled-coil protein 1 (661 aa).

Coiled coils occupy residues L38–E78, R100–S121, D143–K184, E304–L320, and L360–K387. Disordered regions lie at residues Q410–I446, L467–S562, and L573–Q592. Residues N414–P430 are compositionally biased toward low complexity. Residues G436–N445 are compositionally biased toward basic and acidic residues. Composition is skewed to polar residues over residues V472 to V481, H548 to S562, and F582 to Q592.

The sequence is that of Meiotic coiled-coil protein 1 (mcp1) from Schizosaccharomyces pombe (strain 972 / ATCC 24843) (Fission yeast).